Consider the following 372-residue polypeptide: Dual-specificity RNA methyltransferase RlmN (372 aa).

The active-site Proton acceptor is Glu93. In terms of domain architecture, Radical SAM core spans 99–338 (EKDRATLCIS…VTVRKTRGDD (240 aa)). Cys106 and Cys343 are oxidised to a cystine. Residues Cys113, Cys117, and Cys120 each coordinate [4Fe-4S] cluster. Residues 167–168 (GE), Ser199, 221–223 (SLH), and Asn300 contribute to the S-adenosyl-L-methionine site. The active-site S-methylcysteine intermediate is Cys343.

The protein belongs to the radical SAM superfamily. RlmN family. [4Fe-4S] cluster serves as cofactor.

The protein localises to the cytoplasm. The enzyme catalyses adenosine(2503) in 23S rRNA + 2 reduced [2Fe-2S]-[ferredoxin] + 2 S-adenosyl-L-methionine = 2-methyladenosine(2503) in 23S rRNA + 5'-deoxyadenosine + L-methionine + 2 oxidized [2Fe-2S]-[ferredoxin] + S-adenosyl-L-homocysteine. It carries out the reaction adenosine(37) in tRNA + 2 reduced [2Fe-2S]-[ferredoxin] + 2 S-adenosyl-L-methionine = 2-methyladenosine(37) in tRNA + 5'-deoxyadenosine + L-methionine + 2 oxidized [2Fe-2S]-[ferredoxin] + S-adenosyl-L-homocysteine. In terms of biological role, specifically methylates position 2 of adenine 2503 in 23S rRNA and position 2 of adenine 37 in tRNAs. m2A2503 modification seems to play a crucial role in the proofreading step occurring at the peptidyl transferase center and thus would serve to optimize ribosomal fidelity. This Psychromonas ingrahamii (strain DSM 17664 / CCUG 51855 / 37) protein is Dual-specificity RNA methyltransferase RlmN.